The chain runs to 807 residues: MAVAHLACDSQGSVVDLSGQGLQKLSPTLPFGNDTQTLILDKNQIIKLEHVEKCRNLVQLSVANNRLVRMMGVAKLIHLRVLNLPHNSIGYVEGLKDLVHLEWINLAGNNLKIIDQINSSTSLQHLDLSDNNISQIGDLSKLKSLKTLLLHGNNIASLRAASACLPQSLTILSLAENEIRDLNEVAFLAGLVDLEQLSIMNNPCVMATPSIPGFDYRPFIVSWCLNLKVLDGYVVSQKESLKAEWLYSQGKGRSYRLGQHIPLVQYLATVCPLTSAHGLQTEEDAKLDKILSKQRLHQKQLLHQTRSDGYLTSSTPNKRLPLSTEHHSPTHVLQTEPTVQVNNWLRSSSSEDHSYAVRNICSSPFGPPHYSSLYMEDIQTDEDKLNCSLLSSESTFMPVAPGLSPVSPTVELRVPAIKADLPVNETVIEFNKDHTELPPSETPEKPKLIPGLSAMQDDKSCCVYPVIKDENVTENIINCETAVSMESTQTSNGPTCHNLIMNCKQASVLDQDVNHINKISKAATKLQSCWRGFYARKYNPKVKDVCYEIRLSRMQEHIVFLTEEVIRLRKEKEEDRIQRILQGEAVRYLWEQVQAIQQWQNTVKLQTANSSENDLPSASNSKHANPALEELPSSPEKLNRKASPDIPDSGFHSVILNHCTMGNTEKNSSEESEYSQPSLDTGRHYNDKVPDSPADQDLTREEQSQSSKDSFTSEQDSSLLQQYLRSVEQLDETADNTSYSERTEESRPEITTCSDNSDLSCSISHFLPENSKQENIDIHSNLPSIDDGHNTPIPCDSSLLVPQPDLV.

LRR repeat units lie at residues aspartate 34–arginine 55, asparagine 56–isoleucine 77, histidine 78–valine 99, histidine 100–threonine 121, serine 122–lysine 143, serine 144–leucine 165, and serine 168–alanine 189. The region spanning threonine 208 to leucine 246 is the LRRCT domain. Residues arginine 306–threonine 330 are disordered. The region spanning isoleucine 519 to glutamate 548 is the IQ domain. The segment covering threonine 607–histidine 623 has biased composition (polar residues). Positions threonine 607–asparagine 756 are disordered. Residues threonine 681–proline 690 are compositionally biased toward basic and acidic residues. The span at serine 704–leucine 724 shows a compositional bias: polar residues.

Its subcellular location is the cytoplasm. It localises to the cytoskeleton. The protein localises to the microtubule organizing center. The protein resides in the centrosome. In terms of biological role, acts as a key negative regulator of ciliogenesis in collaboration with ccp110 by capping the mother centriole thereby preventing cilia formation. Required for recruitment of ccp110 to the centrosome. The polypeptide is Centrosomal protein of 97 kDa (cep97) (Xenopus laevis (African clawed frog)).